The sequence spans 932 residues: F-box protein COS111 (932 aa).

The segment at 29–63 (VSAKHRPSSTGVYGHDASTVDHASRSNNNLNLTRS) is disordered. Residues 53–63 (RSNNNLNLTRS) are compositionally biased toward low complexity. The 48-residue stretch at 146–193 (RKEISDLPDEVLRNILSNVKDDQRTLVNCLYVNKAFYNATKPTLYERP) folds into the F-box domain. Polar residues predominate over residues 346–358 (LSEGKSSDNGNNG). Disordered stretches follow at residues 346 to 369 (LSEGKSSDNGNNGKRQRSNSSVSS), 389 to 450 (TLSG…SNWF), 470 to 500 (ISSKKDEQQNEESAQTAQKIETPIIKRTEPF), and 863 to 893 (SVLPEDVPEDNNADDTNNGENTIAQPFSNDP). Composition is skewed to low complexity over residues 395 to 431 (NNSSKTQSKGKSSSSPGNPNDSSGEQDSIISSSSQID) and 438 to 447 (TSSKSTSSTS). Residues 876-890 (DDTNNGENTIAQPFS) show a composition bias toward polar residues.

Functionally, F-box protein probably involved in ubiquitin conjugation pathway. In Candida glabrata (strain ATCC 2001 / BCRC 20586 / JCM 3761 / NBRC 0622 / NRRL Y-65 / CBS 138) (Yeast), this protein is F-box protein COS111 (COS111).